We begin with the raw amino-acid sequence, 48 residues long: uncharacterized protein (48 aa).

A helical membrane pass occupies residues 20–37 (ILASPLFFANYVLHAAIH).

It localises to the membrane. This is an uncharacterized protein from Saccharomyces cerevisiae (strain ATCC 204508 / S288c) (Baker's yeast).